Reading from the N-terminus, the 314-residue chain is MALAARLWRFLPFRRGAAPGSLLSAGTSGSRGHCGPCRLRGFEVMGNPGTFKRGLLLSALSYLGFETYQVISQAAVVHATAKVEEILEQADYLCESGETEKLYQLLTQYKESEDAELLWRLARASRDVAQLSRTSEEEKKLLVYEALEYAKRALEKNESSFAAHKWYAICLSDVGDYEGIKAKIANAYIIKEHFEKAIELNPKDATSIHLMGIWCYTFAEMPWYQRRIAKMLFATPPSSTYEKALSYFHRAEQVDPNFYSKNLLLLGKTYLKLHNKKLAAFWLMKAKDYPAHTEEDKQIQTEAAQLLTSFSEKN.

The residue at position 165 (Lys165) is an N6-succinyllysine. 2 TPR repeats span residues 168 to 204 (AICL…NPKD) and 222 to 258 (PWYQ…DPNF).

The protein belongs to the RMDN family. In terms of assembly, interacts with microtubules.

The protein resides in the cytoplasm. It localises to the cytoskeleton. Its subcellular location is the spindle. The protein localises to the spindle pole. This is Regulator of microtubule dynamics protein 1 (RMDN1) from Pongo abelii (Sumatran orangutan).